A 354-amino-acid chain; its full sequence is Guanine nucleotide-binding protein G(i) subunit alpha-3 (354 aa).

Gly-2 carries N-myristoyl glycine lipidation. Residue Cys-3 is the site of S-palmitoyl cysteine attachment. The G-alpha domain maps to 32 to 354 (KEVKLLLLGA…KNNLKECGLY (323 aa)). Residues 35–48 (KLLLLGAGESGKST) are G1 motif. Residues Gly-42, Glu-43, Ser-44, Gly-45, Lys-46, Ser-47, Thr-48, Asp-150, Ser-151, Leu-175, Arg-176, Thr-177, Arg-178, Val-179, Lys-180, Thr-181, Val-201, Gly-203, Asn-269, Lys-270, Asp-272, Leu-273, Cys-325, Ala-326, and Thr-327 each contribute to the GTP site. Ser-47 is a Mg(2+) binding site. Positions 173-181 (DVLRTRVKT) are G2 motif. Residue Thr-181 coordinates Mg(2+). The segment at 196 to 205 (FKMFDVGGQR) is G3 motif. Residues 265-272 (ILFLNKKD) are G4 motif. The interval 324–329 (TCATDT) is G5 motif.

This sequence belongs to the G-alpha family. G(i/o/t/z) subfamily. As to quaternary structure, heterotrimeric G proteins are composed of 3 units; alpha, beta and gamma. The alpha subunit contains the guanine nucleotide binding site. GTP binding causes dissociation of the heterotrimer, liberating the individual subunits so that they can interact with downstream effector proteins. Forms a complex with CCDC88A/GIV and EGFR which leads to enhanced EGFR signaling and triggering of cell migration; ligand stimulation is required for recruitment of GNAI3 to the complex. Interacts (inactive GDP-bound form) with CCDC88A/GIV (via GBA motif); the interaction leads to activation of GNAI3. Interacts (inactive GDP-bound form) with CCDC88C/DAPLE (via GBA motif); the interaction leads to activation of GNAI3. Interacts (inactive GDP-bound form) with NUCB1 (via GBA motif) and NUCB2 (via GBA motif); the interaction leads to activation of GNAI3. Interacts (inactive GDP-bound form) with PLCD4 (via GBA motif); the interaction leads to activation of GNAI3. Interacts with INSR; the interaction is probably mediated by CCDC88A/GIV. Interacts with GPSM1. Interacts (GDP-bound form) with GPSM2 (via GoLoco domains). Does not interact with RGS2. Interacts with RGS8 and RGS10; this strongly enhances the intrinsic GTPase activity. Interacts with RGS16; this strongly enhances the intrinsic GTPase activity. Interacts with RGS12. Interacts (via active GTP- or inactive GDP-bound form) with RGS14. Interacts (via active GTP-bound form) with TRPC5 (via ANK repeats) in a homotetrameric ion channel; the interaction is direct and activates the channel activity.

The protein localises to the cytoplasm. It localises to the cell membrane. The protein resides in the cytoskeleton. It is found in the microtubule organizing center. Its subcellular location is the centrosome. Functionally, heterotrimeric guanine nucleotide-binding proteins (G proteins) function as transducers downstream of G protein-coupled receptors (GPCRs) in numerous signaling cascades. The alpha chain contains the guanine nucleotide binding site and alternates between an active, GTP-bound state and an inactive, GDP-bound state. Signaling by an activated GPCR promotes GDP release and GTP binding. The alpha subunit has a low GTPase activity that converts bound GTP to GDP, thereby terminating the signal. Both GDP release and GTP hydrolysis are modulated by numerous regulatory proteins. Signaling is mediated via effector proteins, such as adenylate cyclase. Inhibits adenylate cyclase activity, leading to decreased intracellular cAMP levels. Stimulates the activity of receptor-regulated K(+) channels. The active GTP-bound form prevents the association of RGS14 with centrosomes and is required for the translocation of RGS14 from the cytoplasm to the plasma membrane. May play a role in cell division. The active GTP-bound form activates the calcium permeant TRPC5 ion channels. This is Guanine nucleotide-binding protein G(i) subunit alpha-3 (GNAI3) from Cricetulus griseus (Chinese hamster).